Here is a 110-residue protein sequence, read N- to C-terminus: uncharacterized protein (110 aa).

Residues 1 to 19 (MKYLVGCLCLAAICLSAGA) form the signal peptide. N-linked (GlcNAc...) asparagine glycosylation is present at N101.

As to expression, component of the acid-soluble and acid-insoluble organic matrix of prismatic shell layers (at protein level).

The protein resides in the secreted. This is an uncharacterized protein from Haliotis asinina (Donkey's ear abalone).